The chain runs to 429 residues: MNVDPNITKYMIKAKIVTDGVVEKPDVVGAIFGQTEGLLGDELDLRDLQKSGKIGRIEVEIDTKKGRTEGYVLIPSGLDQVESSILAAALETIDRIGPCKAKVEIESIEDVRINKRDRVIKRAEELYRKMGENGKSLSESIVQTVREEVEKKEIISYGEEHLPAGPAIADSDSIIVVEGRNDVLNLLRYGIKNTIAVQGTSVPKTVKELSKSRTVTLFVDGDHGGDLIIKEMLQVADVDFIARAPPGTEVEELTYKQIIKALKYKTPVEQYLETHGMIEELKEWSSRNTKELEERQGNELKNERPEKINENEESEKNVELKEGSVQKLETVPEFDPSSPESIKFKLKQLYESRELELFDGQSSVGKFPVSDAIEKIESMHGDLLITGGIISQRLLDIAYNIGVKAIYGFKIGNITKKPDDIKVVAWDHI.

Residues 172–246 (DSIIVVEGRN…DVDFIARAPP (75 aa)) enclose the Toprim domain. Positions 178, 220, and 222 each coordinate Mg(2+). The tract at residues 287–322 (RNTKELEERQGNELKNERPEKINENEESEKNVELKE) is disordered.

Belongs to the archaeal DnaG primase family. In terms of assembly, forms a ternary complex with MCM helicase and DNA. Component of the archaeal exosome complex. Mg(2+) serves as cofactor.

The enzyme catalyses ssDNA + n NTP = ssDNA/pppN(pN)n-1 hybrid + (n-1) diphosphate.. Functionally, RNA polymerase that catalyzes the synthesis of short RNA molecules used as primers for DNA polymerase during DNA replication. Also part of the exosome, which is a complex involved in RNA degradation. Acts as a poly(A)-binding protein that enhances the interaction between heteromeric, adenine-rich transcripts and the exosome. The polypeptide is DNA primase DnaG (Picrophilus torridus (strain ATCC 700027 / DSM 9790 / JCM 10055 / NBRC 100828 / KAW 2/3)).